Reading from the N-terminus, the 361-residue chain is Peptide chain release factor 1 (361 aa).

Gln-237 is modified (N5-methylglutamine). The span at Lys-287–Lys-297 shows a compositional bias: basic and acidic residues. The tract at residues Lys-287–Glu-307 is disordered.

It belongs to the prokaryotic/mitochondrial release factor family. In terms of processing, methylated by PrmC. Methylation increases the termination efficiency of RF1.

The protein resides in the cytoplasm. In terms of biological role, peptide chain release factor 1 directs the termination of translation in response to the peptide chain termination codons UAG and UAA. The protein is Peptide chain release factor 1 of Francisella philomiragia subsp. philomiragia (strain ATCC 25017 / CCUG 19701 / FSC 153 / O#319-036).